A 149-amino-acid polypeptide reads, in one-letter code: UPF0260 protein RCAP_rcc02083 (149 aa).

Belongs to the UPF0260 family.

The protein is UPF0260 protein RCAP_rcc02083 of Rhodobacter capsulatus (strain ATCC BAA-309 / NBRC 16581 / SB1003).